We begin with the raw amino-acid sequence, 89 residues long: Ubiquinol-cytochrome-c reductase complex assembly factor 3 (89 aa).

Topologically, residues methionine 1–alanine 7 are mitochondrial matrix. Residues leucine 8 to valine 28 traverse the membrane as a helical segment. The tract at residues isoleucine 23–tryptophan 80 is mediates lipid-binding. Topologically, residues threonine 29–alanine 89 are mitochondrial intermembrane.

The protein belongs to the UQCC3 family. In terms of assembly, associates with the ubiquinol-cytochrome c reductase complex (mitochondrial respiratory chain complex III(CIII) or cytochrome b-c1 complex). Interacts with UQCC1. Forms a complex, named COMC, composed of UQCC1, UQCC2; UQCC3 and UQCC4; mediates MT-CYB hemylation and association with the first nuclear-encoded complex III subunit UQCRQ. In terms of processing, probably cleaved by OMA1 under mitochondrial stress conditions.

The protein localises to the mitochondrion inner membrane. In terms of biological role, required for the assembly of the ubiquinol-cytochrome c reductase complex (mitochondrial respiratory chain complex III or cytochrome b-c1 complex), mediating cytochrome b recruitment and probably stabilization within the complex. Thereby, plays an important role in ATP production by mitochondria. Cardiolipin-binding protein, it may also control the cardiolipin composition of mitochondria membranes and their morphology. The sequence is that of Ubiquinol-cytochrome-c reductase complex assembly factor 3 from Rattus norvegicus (Rat).